Here is a 241-residue protein sequence, read N- to C-terminus: Probable pectate lyase D (241 aa).

An N-terminal signal peptide occupies residues 1–17; sequence MYQKSLLFSLLATSALA. An N-linked (GlcNAc...) asparagine glycan is attached at asparagine 215. The disordered stretch occupies residues 215-241; the sequence is NNSGDEPEEVSEGPSDACQYSEPLSSC.

This sequence belongs to the polysaccharide lyase 3 family. It depends on Ca(2+) as a cofactor.

It localises to the secreted. It carries out the reaction Eliminative cleavage of (1-&gt;4)-alpha-D-galacturonan to give oligosaccharides with 4-deoxy-alpha-D-galact-4-enuronosyl groups at their non-reducing ends.. Functionally, pectinolytic enzyme consist of four classes of enzymes: pectin lyase, polygalacturonase, pectin methylesterase and rhamnogalacturonase. Among pectinolytic enzymes, pectin lyase is the most important in depolymerization of pectin, since it cleaves internal glycosidic bonds of highly methylated pectins. Favors pectate, the anion, over pectin, the methyl ester. The polypeptide is Probable pectate lyase D (plyD) (Neosartorya fischeri (strain ATCC 1020 / DSM 3700 / CBS 544.65 / FGSC A1164 / JCM 1740 / NRRL 181 / WB 181) (Aspergillus fischerianus)).